The following is an 874-amino-acid chain: Trimodular acetylaranotin synthesis protein ataIMG (874 aa).

Residues 1–339 (MANLSGLSNR…DSGLLRASSI (339 aa)) form an aminotransferase ataI region. The disordered stretch occupies residues 20–39 (RFGFQTTQQAKPTESSKTPI). The span at 23-37 (FQTTQQAKPTESSKT) shows a compositional bias: polar residues. Residues 340-668 (SYNSMVKGSS…QERTEAEWRT (329 aa)) form an O-methyltransferase ataM region. Aspartate 625 is an S-adenosyl-L-methionine binding site. The glutathione S-transferase ataG stretch occupies residues 669-874 (LAGRTGWEIR…VMEMGPQIGH (206 aa)). The GST N-terminal domain occupies 699-766 (KPLILAHELE…YLADRFDDGT (68 aa)). The region spanning 739-874 (DPETKAEVIV…VMEMGPQIGH (136 aa)) is the GST C-terminal domain.

The protein in the N-terminal section; belongs to the class-I pyridoxal-phosphate-dependent aminotransferase family. This sequence in the 2nd section; belongs to the class I-like SAM-binding methyltransferase superfamily. Cation-independent O-methyltransferase family. It in the C-terminal section; belongs to the GST superfamily. The cofactor is pyridoxal 5'-phosphate.

It carries out the reaction RX + glutathione = an S-substituted glutathione + a halide anion + H(+). It functions in the pathway mycotoxin biosynthesis. Its function is as follows. Trimodular acetylaranotin synthesis protein; part of the gene cluster that mediates the biosynthesis of acetylaranotin, a member of the epipolythiodioxopiperazine (ETP) class of toxins characterized by a disulfide-bridged cyclic dipeptide. The first step of acetylaranotin biosynthesis is performed by the NRPS ataP which produces diketopiperazine cyclo-L-Phe-L-Phe via the condensation of 2 phenylalanines (L-Phe). The ataC domain of ataTC then catalyzes the formation of bishydroxylation of cyclo-L-Phe-L-Phe. The glutathione S-transferase domain ataG in ataIMG further catalyzes the conjugation of two glutathiones to the bishydroxylated intermediate. Next, the dipeptidase ataJ removes the Glu residues. The following step is performed by the carbon sulfur lyase domain ataI of ataIMG which may convert the bis-cysteinyl adduct to yield an epidithiol intermediate. The ataT domain from ataTC then catalyzes the oxidation of the free dithiols, followed by a cyclization step catalyzed by the cytochrome P450 ataF. AtaF probably acts as an epoxidase to promote a dual epoxidation formation at C8 and C9 along with C8' and C9', followed by the spontaneous nucleophilic attack of the amide nitrogens N10 and N10' to yield an intermediate with the pyrrolidine partial structure. The final steps of acetylaranotin biosynthesis involve the acetylation and ring rearrangement of an epitetrathiodiketopiperazine intermediate to produce acetylaranotin. AtaH probably catalyzes the acetylation of epitetrathiodiketopiperazine to produce a diacetate and ataY is responsible for the formation of the dihydrooxepin moiety that converts the diacetate intermediate to acetylaranotin via acetylapoaranotin. Both enzymes could function independently in the absence of the other. The acetylaranotin bis-thiomethyltransferase ataS located outside of acetylaranotin gene cluster is the main thiomethyltransferase responsible for converting acetylaranotin and its related intermediates to their methylated forms. This is Trimodular acetylaranotin synthesis protein ataIMG from Aspergillus terreus (strain NIH 2624 / FGSC A1156).